Consider the following 216-residue polypeptide: ATP phosphoribosyltransferase (216 aa).

The protein belongs to the ATP phosphoribosyltransferase family. Short subfamily. As to quaternary structure, heteromultimer composed of HisG and HisZ subunits.

It localises to the cytoplasm. The catalysed reaction is 1-(5-phospho-beta-D-ribosyl)-ATP + diphosphate = 5-phospho-alpha-D-ribose 1-diphosphate + ATP. It participates in amino-acid biosynthesis; L-histidine biosynthesis; L-histidine from 5-phospho-alpha-D-ribose 1-diphosphate: step 1/9. Its function is as follows. Catalyzes the condensation of ATP and 5-phosphoribose 1-diphosphate to form N'-(5'-phosphoribosyl)-ATP (PR-ATP). Has a crucial role in the pathway because the rate of histidine biosynthesis seems to be controlled primarily by regulation of HisG enzymatic activity. This is ATP phosphoribosyltransferase from Microcystis aeruginosa (strain NIES-843 / IAM M-2473).